Consider the following 294-residue polypeptide: Major pollen allergen Pha a 5.3 (294 aa).

Positions 1–25 are cleaved as a signal peptide; it reads MAVQKYTVALFLAMALVAGPAASYA.

The protein belongs to the Poa p IX/Phl p VI allergen family.

This Phalaris aquatica (Canary grass) protein is Major pollen allergen Pha a 5.3.